A 167-amino-acid polypeptide reads, in one-letter code: uncharacterized protein (167 aa).

The protein resides in the mitochondrion. This is an uncharacterized protein from Ascobolus immersus.